The following is a 396-amino-acid chain: 1-deoxy-D-xylulose 5-phosphate reductoisomerase (396 aa).

Residues Thr15, Gly16, Ile18, and Asn127 each coordinate NADPH. 1-deoxy-D-xylulose 5-phosphate is bound at residue Lys128. Glu129 provides a ligand contact to NADPH. Asp153 provides a ligand contact to Mn(2+). 1-deoxy-D-xylulose 5-phosphate is bound by residues Ser154, Glu155, Ser177, and His200. Residue Glu155 participates in Mn(2+) binding. Gly206 is an NADPH binding site. Residues Ser213, Asn218, Lys219, and Glu222 each contribute to the 1-deoxy-D-xylulose 5-phosphate site. Glu222 provides a ligand contact to Mn(2+).

It belongs to the DXR family. The cofactor is Mg(2+). It depends on Mn(2+) as a cofactor.

It catalyses the reaction 2-C-methyl-D-erythritol 4-phosphate + NADP(+) = 1-deoxy-D-xylulose 5-phosphate + NADPH + H(+). It functions in the pathway isoprenoid biosynthesis; isopentenyl diphosphate biosynthesis via DXP pathway; isopentenyl diphosphate from 1-deoxy-D-xylulose 5-phosphate: step 1/6. Functionally, catalyzes the NADPH-dependent rearrangement and reduction of 1-deoxy-D-xylulose-5-phosphate (DXP) to 2-C-methyl-D-erythritol 4-phosphate (MEP). The sequence is that of 1-deoxy-D-xylulose 5-phosphate reductoisomerase from Anaplasma marginale (strain Florida).